A 242-amino-acid polypeptide reads, in one-letter code: Phosphate import ATP-binding protein PstB 1 (242 aa).

Residues 1–237 (MDLYYGSYRA…PKDQRTEDYI (237 aa)) form the ABC transporter domain. 28–35 (GPSGCGKS) is an ATP binding site.

This sequence belongs to the ABC transporter superfamily. Phosphate importer (TC 3.A.1.7) family. In terms of assembly, the complex is composed of two ATP-binding proteins (PstB), two transmembrane proteins (PstC and PstA) and a solute-binding protein (PstS).

It is found in the cell membrane. The enzyme catalyses phosphate(out) + ATP + H2O = ADP + 2 phosphate(in) + H(+). Functionally, part of the ABC transporter complex PstSACB involved in phosphate import. Responsible for energy coupling to the transport system. The sequence is that of Phosphate import ATP-binding protein PstB 1 from Symbiobacterium thermophilum (strain DSM 24528 / JCM 14929 / IAM 14863 / T).